The chain runs to 697 residues: uncharacterized protein (697 aa).

A run of 14 helical transmembrane segments spans residues 65–85 (PVRN…VGIY), 106–126 (CTFR…LHNF), 131–151 (YRQS…EKAI), 163–183 (DAAL…DINE), 194–214 (LSSY…VPLG), 227–247 (TSAT…TASI), 286–306 (STNA…ANKD), 316–336 (PVTD…VLLE), 361–381 (SDEI…PEGV), 394–414 (MFEL…MAWE), 419–439 (ERML…EPYH), 450–470 (SVKR…YLAI), 487–507 (QGSQ…YKVW), and 558–578 (TSAG…HHRQ). A disordered region spans residues 246–321 (SINVRTSATT…NRFHPVTDIN (76 aa)). The segment covering 251–298 (TSATTTESTNSNTNATTTESTNSSTNATTTASTNSSTNATTTESTNAS) has biased composition (low complexity). The segment covering 299–321 (AKEDANKDGNAEDNRFHPVTDIN) has biased composition (basic and acidic residues).

The protein localises to the membrane. This is an uncharacterized protein from Saccharomyces cerevisiae (strain ATCC 204508 / S288c) (Baker's yeast).